Consider the following 210-residue polypeptide: Coatomer subunit zeta-2 (210 aa).

Residues 1–12 (MQRPEAWPRPHP) show a composition bias toward basic and acidic residues. The disordered stretch occupies residues 1 to 34 (MQRPEAWPRPHPGEGAAAAQAGGPAPPARAGEPS). A compositionally biased stretch (low complexity) spans 13–34 (GEGAAAAQAGGPAPPARAGEPS).

The protein belongs to the adaptor complexes small subunit family. Oligomeric complex.

The protein localises to the cytoplasm. The protein resides in the endoplasmic reticulum-Golgi intermediate compartment membrane. It is found in the golgi apparatus membrane. It localises to the cytoplasmic vesicle. Its subcellular location is the COPI-coated vesicle membrane. Functionally, the coatomer is a cytosolic protein complex that binds to dilysine motifs and reversibly associates with Golgi non-clathrin-coated vesicles, which further mediate biosynthetic protein transport from the ER, via the Golgi up to the trans Golgi network. Coatomer complex is required for budding from Golgi membranes, and is essential for the retrograde Golgi-to-ER transport of dilysine-tagged proteins. The zeta subunit may be involved in regulating the coat assembly and, hence, the rate of biosynthetic protein transport due to its association-dissociation properties with the coatomer complex. The polypeptide is Coatomer subunit zeta-2 (COPZ2) (Homo sapiens (Human)).